A 325-amino-acid polypeptide reads, in one-letter code: Probable flavonol synthase 5 (325 aa).

Residues 1 to 21 (MEEERDHNASESSLPSLSKQL) are disordered. Residues 10 to 21 (SESSLPSLSKQL) are compositionally biased toward polar residues. Positions 180–280 (TAEYVLRVNF…RISWPVFVAP (101 aa)) constitute a Fe2OG dioxygenase domain. Residue 188-190 (NFY) participates in 2-oxoglutarate binding. Fe cation is bound by residues histidine 205, aspartate 207, and histidine 261. Residue 271–273 (RIS) coordinates 2-oxoglutarate.

Belongs to the iron/ascorbate-dependent oxidoreductase family. Fe(2+) serves as cofactor. As to expression, expressed in young seedlings.

The enzyme catalyses a (2R,3R)-dihydroflavonol + 2-oxoglutarate + O2 = a flavonol + succinate + CO2 + H2O. It functions in the pathway secondary metabolite biosynthesis; flavonoid biosynthesis. The polypeptide is Probable flavonol synthase 5 (FLS5) (Arabidopsis thaliana (Mouse-ear cress)).